Here is a 357-residue protein sequence, read N- to C-terminus: Protein RecA (357 aa).

73–80 contacts ATP; the sequence is GPESSGKT.

Belongs to the RecA family.

It localises to the cytoplasm. Its function is as follows. Can catalyze the hydrolysis of ATP in the presence of single-stranded DNA, the ATP-dependent uptake of single-stranded DNA by duplex DNA, and the ATP-dependent hybridization of homologous single-stranded DNAs. It interacts with LexA causing its activation and leading to its autocatalytic cleavage. This is Protein RecA from Nitratidesulfovibrio vulgaris (strain DSM 19637 / Miyazaki F) (Desulfovibrio vulgaris).